A 103-amino-acid chain; its full sequence is Large ribosomal subunit protein bL21 (103 aa).

This sequence belongs to the bacterial ribosomal protein bL21 family. As to quaternary structure, part of the 50S ribosomal subunit. Contacts protein L20.

Functionally, this protein binds to 23S rRNA in the presence of protein L20. This Rhodococcus erythropolis (strain PR4 / NBRC 100887) protein is Large ribosomal subunit protein bL21.